The following is a 271-amino-acid chain: Centromere protein K (271 aa).

Coiled coils occupy residues 11–44 (DTIT…QNKL) and 102–151 (LRCD…VENQ).

Belongs to the CENP-K/MCM22 family. In terms of assembly, component of the CENPA-CAD complex, composed of CENPI, CENPK, CENPL, CENPO, CENPP, CENPQ, CENPR and CENPS. The CENPA-CAD complex interacts with the CENPA-NAC complex, at least composed of CENPA, CENPC, CENPH, CENPM, CENPN, CENPT and CENPU. May interact with Sox6. In terms of tissue distribution, highly expressed in testis.

It localises to the nucleus. Its subcellular location is the chromosome. It is found in the centromere. The protein resides in the kinetochore. Its function is as follows. Component of the CENPA-CAD (nucleosome distal) complex, a complex recruited to centromeres which is involved in assembly of kinetochore proteins, mitotic progression and chromosome segregation. May be involved in incorporation of newly synthesized CENPA into centromeres via its interaction with the CENPA-NAC complex. Acts in coordination with KNL1 to recruit the NDC80 complex to the outer kinetochore. The protein is Centromere protein K (Cenpk) of Mus musculus (Mouse).